A 906-amino-acid polypeptide reads, in one-letter code: uncharacterized protein (906 aa).

Disordered stretches follow at residues 231–322 (KEDA…PSTI) and 865–906 (AGAY…DEDE). Residues 236–250 (TTKQTTTTTTTTPQT) are compositionally biased toward low complexity. A compositionally biased stretch (pro residues) spans 264 to 281 (TPTPAPAPKPTTPKPTPA). Positions 302–314 (SVNNIPTPSDTNE) are enriched in polar residues. Over residues 867 to 906 (AYEDDDDDEGEGNEDDEDNDENEDEDEGEGEGDSSEDEDE) the composition is skewed to acidic residues.

This is an uncharacterized protein from Dictyostelium sp. (strain GA11) (Slime mold).